Reading from the N-terminus, the 536-residue chain is Phosphoenolpyruvate carboxykinase (ATP) (536 aa).

Residues R62, Y203, and K209 each coordinate substrate. Residues K209, H228, and 244-252 contribute to the ATP site; that span reads GLSGTGKTT. Residues K209 and H228 each coordinate Mn(2+). Residue D265 participates in Mn(2+) binding. Residues E293, R329, 445–446, and T451 each bind ATP; that span reads RI. R329 provides a ligand contact to substrate.

This sequence belongs to the phosphoenolpyruvate carboxykinase (ATP) family. As to quaternary structure, monomer. Mn(2+) serves as cofactor.

It localises to the cytoplasm. It catalyses the reaction oxaloacetate + ATP = phosphoenolpyruvate + ADP + CO2. It participates in carbohydrate biosynthesis; gluconeogenesis. Functionally, involved in the gluconeogenesis. Catalyzes the conversion of oxaloacetate (OAA) to phosphoenolpyruvate (PEP) through direct phosphoryl transfer between the nucleoside triphosphate and OAA. The sequence is that of Phosphoenolpyruvate carboxykinase (ATP) from Actinobacillus pleuropneumoniae serotype 5b (strain L20).